A 291-amino-acid chain; its full sequence is Probable cell wall amidase LytH (291 aa).

Residues 1-40 form the signal peptide; sequence MKKIEAWLSKKGLKNKRTLIVVIAFVLFIIFLFLLLNSNS. The SH3b domain occupies 41–105; sequence EDSGNITITE…WIAGWHTNLD (65 aa). The segment at 118–140 is disordered; it reads QGKTIVLDPGHGGSDQGASSNTK. A MurNAc-LAA domain is found at 122–286; the sequence is IVLDPGHGGS…LEQAIVDGLK (165 aa).

Belongs to the N-acetylmuramoyl-L-alanine amidase 3 family.

It localises to the secreted. In terms of biological role, probably involved in cell-wall metabolism. The protein is Probable cell wall amidase LytH (lytH) of Staphylococcus aureus (strain USA300).